The chain runs to 281 residues: Probable ABC transporter ATP-binding protein AZC_3926 (281 aa).

The interval 1-38 (MNVLSMFGRNATRETSSPAATAGRYADEGDWEGDDHQP) is disordered. The ABC transporter domain occupies 45 to 277 (LAAFGLAKSY…PDVRRLYLGE (233 aa)). 77–84 (GPNGAGKT) serves as a coordination point for ATP.

The protein belongs to the ABC transporter superfamily.

The protein is Probable ABC transporter ATP-binding protein AZC_3926 of Azorhizobium caulinodans (strain ATCC 43989 / DSM 5975 / JCM 20966 / LMG 6465 / NBRC 14845 / NCIMB 13405 / ORS 571).